The sequence spans 459 residues: Bifunctional protein GlmU (459 aa).

The interval 1-229 is pyrophosphorylase; it reads MTNYAIILAA…FDESLGVNDR (229 aa). UDP-N-acetyl-alpha-D-glucosamine is bound by residues 8–11, lysine 22, glutamine 72, and 77–78; these read LAAG and GT. Aspartate 102 contributes to the Mg(2+) binding site. 4 residues coordinate UDP-N-acetyl-alpha-D-glucosamine: glycine 139, glutamate 154, asparagine 169, and asparagine 227. Asparagine 227 is a Mg(2+) binding site. Residues 230–250 form a linker region; sequence VALATAESVMRRRINQKHMVN. The N-acetyltransferase stretch occupies residues 251 to 459; the sequence is GVSFVNPDAT…KRLPHHPQNK (209 aa). The UDP-N-acetyl-alpha-D-glucosamine site is built by arginine 332 and lysine 350. The active-site Proton acceptor is the histidine 362. Residues tyrosine 365 and asparagine 376 each contribute to the UDP-N-acetyl-alpha-D-glucosamine site. Acetyl-CoA is bound by residues alanine 379, 385–386, serine 404, alanine 422, and arginine 439; that span reads NY.

This sequence in the N-terminal section; belongs to the N-acetylglucosamine-1-phosphate uridyltransferase family. In the C-terminal section; belongs to the transferase hexapeptide repeat family. Homotrimer. Requires Mg(2+) as cofactor.

Its subcellular location is the cytoplasm. It carries out the reaction alpha-D-glucosamine 1-phosphate + acetyl-CoA = N-acetyl-alpha-D-glucosamine 1-phosphate + CoA + H(+). The catalysed reaction is N-acetyl-alpha-D-glucosamine 1-phosphate + UTP + H(+) = UDP-N-acetyl-alpha-D-glucosamine + diphosphate. It participates in nucleotide-sugar biosynthesis; UDP-N-acetyl-alpha-D-glucosamine biosynthesis; N-acetyl-alpha-D-glucosamine 1-phosphate from alpha-D-glucosamine 6-phosphate (route II): step 2/2. The protein operates within nucleotide-sugar biosynthesis; UDP-N-acetyl-alpha-D-glucosamine biosynthesis; UDP-N-acetyl-alpha-D-glucosamine from N-acetyl-alpha-D-glucosamine 1-phosphate: step 1/1. It functions in the pathway bacterial outer membrane biogenesis; LPS lipid A biosynthesis. Catalyzes the last two sequential reactions in the de novo biosynthetic pathway for UDP-N-acetylglucosamine (UDP-GlcNAc). The C-terminal domain catalyzes the transfer of acetyl group from acetyl coenzyme A to glucosamine-1-phosphate (GlcN-1-P) to produce N-acetylglucosamine-1-phosphate (GlcNAc-1-P), which is converted into UDP-GlcNAc by the transfer of uridine 5-monophosphate (from uridine 5-triphosphate), a reaction catalyzed by the N-terminal domain. This chain is Bifunctional protein GlmU, found in Streptococcus gordonii (strain Challis / ATCC 35105 / BCRC 15272 / CH1 / DL1 / V288).